Reading from the N-terminus, the 62-residue chain is Phylloseptin-Az7 (62 aa).

An N-terminal signal peptide occupies residues 1–19; the sequence is LKKSLFLVLFLGLVSLSIC. Positions 20–40 are excised as a propeptide; it reads EEEKRETEEKENEQEDDKSEE. Phe61 is subject to Phenylalanine amide.

This sequence belongs to the frog skin active peptide (FSAP) family. Phylloseptin subfamily. As to expression, expressed by the skin glands.

The protein resides in the secreted. Has antimicrobial activity. The polypeptide is Phylloseptin-Az7 (psn15) (Pithecopus azureus (Orange-legged monkey tree frog)).